Reading from the N-terminus, the 430-residue chain is Elongation factor 1-alpha (430 aa).

Positions 7–219 constitute a tr-type G domain; the sequence is KPHVNIVFIG…DQIPEPEKPV (213 aa). The tract at residues 16-23 is G1; sequence GHVDHGKS. 16–23 is a GTP binding site; sequence GHVDHGKS. S23 is a Mg(2+) binding site. The G2 stretch occupies residues 70-74; it reads GITID. Residues 91-94 form a G3 region; the sequence is DAPG. Residues 91-95 and 146-149 each bind GTP; these read DAPGH and NKMD. Positions 146–149 are G4; that stretch reads NKMD. The G5 stretch occupies residues 183–185; the sequence is SAW.

Belongs to the TRAFAC class translation factor GTPase superfamily. Classic translation factor GTPase family. EF-Tu/EF-1A subfamily.

The protein resides in the cytoplasm. The catalysed reaction is GTP + H2O = GDP + phosphate + H(+). Its function is as follows. GTP hydrolase that promotes the GTP-dependent binding of aminoacyl-tRNA to the A-site of ribosomes during protein biosynthesis. The protein is Elongation factor 1-alpha of Pyrococcus woesei.